Here is a 1178-residue protein sequence, read N- to C-terminus: Dual specificity mitogen-activated protein kinase kinase hemipterous (1178 aa).

2 disordered regions span residues 74 to 103 (SGSGISIAQRPAPPVPHATPFGSASASSSS) and 115 to 148 (ATGTFGGTYTPPTTRVSRATPTLPMLSSGPGGGL). 2 stretches are compositionally biased toward low complexity: residues 91 to 103 (ATPFGSASASSSS) and 115 to 128 (ATGTFGGTYTPPTT). Positions 197–456 (LKHLGDLGNG…YPELLAQPFI (260 aa)) constitute a Protein kinase domain. ATP-binding positions include 203 to 211 (LGNGTSGNV) and Lys-226. Asp-320 serves as the catalytic Proton acceptor. Ser-348 carries the post-translational modification Phosphoserine. Phosphothreonine is present on Thr-352. The interval 522-648 (TYAGQSPTNP…DESPKKESMF (127 aa)) is disordered. Residues 523 to 543 (YAGQSPTNPQKTIKPTQIPSY) show a composition bias toward polar residues. Residues 544–570 (QQQQSQFFMQSATQLPQTTTTTPTATT) are compositionally biased toward low complexity. Residues 574-593 (GGSGNGNGRGNGSGGSGNGS) show a composition bias toward gly residues. The segment covering 594 to 608 (GSSSSASPLSPPSAG) has biased composition (low complexity). Basic and acidic residues predominate over residues 636 to 646 (KYNDESPKKES). Residues Ser-646 and Ser-662 each carry the phosphoserine modification. 6 disordered regions span residues 715–783 (TTTP…LQPG), 797–851 (QNQL…STCS), 912–933 (GTSPTLQSRSPEQQSDYGGNGN), 999–1026 (TSPVASSMDRDQEPVHPQPPAYRSVVNN), 1042–1108 (SSSS…NRGQ), and 1122–1178 (GQPP…TIDQ). Polar residues predominate over residues 724-734 (TENSQAYDSCD). 3 stretches are compositionally biased toward low complexity: residues 735 to 783 (SSSN…LQPG), 808 to 817 (RYQQQRQQPP), and 837 to 851 (THSTSSQSSTQSTCS). Over residues 912-928 (GTSPTLQSRSPEQQSDY) the composition is skewed to polar residues. A compositionally biased stretch (low complexity) spans 1042-1055 (SSSSNTSQSTSPTT). 2 positions are modified to phosphoserine: Ser-1150 and Ser-1154. The span at 1168-1178 (PQRRIYRTIDQ) shows a compositional bias: basic and acidic residues.

Belongs to the protein kinase superfamily. STE Ser/Thr protein kinase family. MAP kinase kinase subfamily. Post-translationally, MAPKK is itself dependent on Ser/Thr phosphorylation for activity catalyzed by MAP kinase kinase kinases. In terms of processing, weakly autophosphorylated.

It catalyses the reaction L-seryl-[protein] + ATP = O-phospho-L-seryl-[protein] + ADP + H(+). The enzyme catalyses L-threonyl-[protein] + ATP = O-phospho-L-threonyl-[protein] + ADP + H(+). The catalysed reaction is L-tyrosyl-[protein] + ATP = O-phospho-L-tyrosyl-[protein] + ADP + H(+). Functionally, required for the epithelial cell sheet movement called dorsal closure (DC), which allows establishment of the dorsal epidermis. Controls the expression in the dorsal epithelium edges of another dorsal closure gene, puckered (puc). Phosphorylates and activates the MAP kinase bsk; bsk signal transduction pathway mediates an immune response and morphogenesis. In Drosophila melanogaster (Fruit fly), this protein is Dual specificity mitogen-activated protein kinase kinase hemipterous (hep).